A 308-amino-acid polypeptide reads, in one-letter code: uncharacterized protein (308 aa).

The signal sequence occupies residues 1–17 (MKSLALLLSLLINFSIG). N13, N91, N159, and N210 each carry an N-linked (GlcNAc...) asparagine glycan. A disordered region spans residues 213–308 (DEISGGTGAG…HDNYISSFCT (96 aa)). Gly residues-rich tracts occupy residues 217–231 (GGTG…GSGS) and 239–252 (SDGG…GSGS). The segment covering 267–284 (NKNNNKNKNNNNNNNNYN) has biased composition (low complexity).

It localises to the secreted. This is an uncharacterized protein from Dictyostelium discoideum (Social amoeba).